Here is a 952-residue protein sequence, read N- to C-terminus: Glycine dehydrogenase (decarboxylating) (952 aa).

An N6-(pyridoxal phosphate)lysine modification is found at lysine 696.

It belongs to the GcvP family. In terms of assembly, the glycine cleavage system is composed of four proteins: P, T, L and H. The cofactor is pyridoxal 5'-phosphate.

It catalyses the reaction N(6)-[(R)-lipoyl]-L-lysyl-[glycine-cleavage complex H protein] + glycine + H(+) = N(6)-[(R)-S(8)-aminomethyldihydrolipoyl]-L-lysyl-[glycine-cleavage complex H protein] + CO2. Its function is as follows. The glycine cleavage system catalyzes the degradation of glycine. The P protein binds the alpha-amino group of glycine through its pyridoxal phosphate cofactor; CO(2) is released and the remaining methylamine moiety is then transferred to the lipoamide cofactor of the H protein. This is Glycine dehydrogenase (decarboxylating) from Pelagibacter ubique (strain HTCC1062).